The chain runs to 393 residues: N-lysine methyltransferase KMT5A (393 aa).

Residues proline 68–valine 88 form a disordered region. The span at methionine 72–glycine 85 shows a compositional bias: basic and acidic residues. Serine 100 is subject to Phosphoserine. The stretch at arginine 134–glycine 163 forms a coiled coil. The disordered stretch occupies residues lysine 135–serine 241. Residues methionine 150–lysine 162 are compositionally biased toward basic and acidic residues. Lysine 162 carries the post-translational modification N6-acetyllysine. A Phosphothreonine modification is found at threonine 181. Basic residues predominate over residues alanine 197–glutamine 213. Residues glutamate 257–glycine 378 form the SET domain. S-adenosyl-L-methionine-binding positions include lysine 267–arginine 269, tyrosine 312, and asparagine 339–histidine 340.

This sequence belongs to the class V-like SAM-binding methyltransferase superfamily. Histone-lysine methyltransferase family. PR/SET subfamily. As to quaternary structure, interacts with L3MBTL1. Interacts with SIRT2 (phosphorylated form); the interaction is direct, stimulates KMT5A-mediated methyltransferase activity at histone H4 'Lys-20' (H4K20me1) and is increased in a H(2)O(2)-induced oxidative stress-dependent manner. In terms of processing, acetylated at Lys-162; does not affect methyltransferase activity. Deacetylated at Lys-162 possibly by SIRT2; does not change methyltransferase activity. Post-translationally, ubiquitinated and degraded by the DCX(DTL) complex.

The protein resides in the nucleus. It localises to the chromosome. It carries out the reaction L-lysyl(20)-[histone H4] + S-adenosyl-L-methionine = N(6)-methyl-L-lysyl(20)-[histone H4] + S-adenosyl-L-homocysteine + H(+). The catalysed reaction is L-lysyl-[protein] + S-adenosyl-L-methionine = N(6)-methyl-L-lysyl-[protein] + S-adenosyl-L-homocysteine + H(+). Its function is as follows. Protein-lysine N-methyltransferase that monomethylates both histones and non-histone proteins. Specifically monomethylates 'Lys-20' of histone H4 (H4K20me1). H4K20me1 is enriched during mitosis and represents a specific tag for epigenetic transcriptional repression. Mainly functions in euchromatin regions, thereby playing a central role in the silencing of euchromatic genes. Required for cell proliferation, probably by contributing to the maintenance of proper higher-order structure of DNA during mitosis. Involved in chromosome condensation and proper cytokinesis. Nucleosomes are preferred as substrate compared to free histones. Mediates monomethylation of p53/TP53 at 'Lys-382', leading to repress p53/TP53-target genes. Plays a negative role in TGF-beta response regulation and a positive role in cell migration. The sequence is that of N-lysine methyltransferase KMT5A from Homo sapiens (Human).